A 335-amino-acid chain; its full sequence is Protein PXR1 (335 aa).

The region spanning 25–71 (KSRFGHKYLEKLGWEPGKGLGHASHAMSTHIKVTIKDDTMGLGAKLK) is the G-patch domain. The segment at 155–310 (DDAEDAKVSG…PPTISTRLSV (156 aa)) is disordered. Residues 163–175 (SGKHRDRKSRAKR) show a composition bias toward basic residues. Residues 183–209 (LKEKCRDIDRTRKSKRKEKEQEKEKNR) are compositionally biased toward basic and acidic residues. A compositionally biased stretch (basic residues) spans 226-257 (KKDKKDKKEKKEKKEKKEKKEKKHKEKSNKRL).

Belongs to the PINX1 family.

It localises to the nucleus. The protein resides in the nucleolus. Its function is as follows. Involved in rRNA-processing at A0, A1 and A2 sites and negatively regulates telomerase. This chain is Protein PXR1 (PXR1), found in Eremothecium gossypii (strain ATCC 10895 / CBS 109.51 / FGSC 9923 / NRRL Y-1056) (Yeast).